The sequence spans 305 residues: MVDKLTHLKQLEAESIHIIREVAAEFDNPVMLYSIGKDSAVMLHLARKAFFPGKLPFPVMHVDTQWKFQEMYKFRDRMVEELGLDLITHVNPDGVAQGINPFTHGSAKHTDIMKTEGLKQALDKHGFDAAFGGARRDEEKSRAKERVYSFRDSKHRWDPKNQRPELWNVYNGKVNKGESIRVFPLSNWTELDIWQYIYLEGIPIVPLYFAAEREVIEKNGTLIMIDDERILEHLSDEEKARIVKKKVRFRTLGCYPLTGAVESEAESLTDIIQEMLLTRTSERQGRVIDHDGAGSMEDKKRQGYF.

The protein belongs to the PAPS reductase family. CysD subfamily. Heterodimer composed of CysD, the smaller subunit, and CysN.

It carries out the reaction sulfate + ATP + H(+) = adenosine 5'-phosphosulfate + diphosphate. It participates in sulfur metabolism; hydrogen sulfide biosynthesis; sulfite from sulfate: step 1/3. With CysN forms the ATP sulfurylase (ATPS) that catalyzes the adenylation of sulfate producing adenosine 5'-phosphosulfate (APS) and diphosphate, the first enzymatic step in sulfur assimilation pathway. APS synthesis involves the formation of a high-energy phosphoric-sulfuric acid anhydride bond driven by GTP hydrolysis by CysN coupled to ATP hydrolysis by CysD. The polypeptide is Sulfate adenylyltransferase subunit 2 (Pseudomonas fluorescens (strain ATCC BAA-477 / NRRL B-23932 / Pf-5)).